Consider the following 159-residue polypeptide: 3-hydroxyacyl-[acyl-carrier-protein] dehydratase FabZ (159 aa).

Residue H58 is part of the active site.

The protein belongs to the thioester dehydratase family. FabZ subfamily.

Its subcellular location is the cytoplasm. The enzyme catalyses a (3R)-hydroxyacyl-[ACP] = a (2E)-enoyl-[ACP] + H2O. Its function is as follows. Involved in unsaturated fatty acids biosynthesis. Catalyzes the dehydration of short chain beta-hydroxyacyl-ACPs and long chain saturated and unsaturated beta-hydroxyacyl-ACPs. In Helicobacter pylori (strain G27), this protein is 3-hydroxyacyl-[acyl-carrier-protein] dehydratase FabZ.